Reading from the N-terminus, the 159-residue chain is GDP-mannose mannosyl hydrolase (159 aa).

Substrate is bound by residues 2 to 3, F8, and R36; that span reads FL. The Nudix hydrolase domain occupies 13–153; the sequence is RSTPLVSLDF…SRAYFLAEKR (141 aa). Residues G49, E69, and Q122 each coordinate Mg(2+). A Nudix box motif is present at residues 50–71; that stretch reads GRVQKDETLEAAFERLTMAELG.

Homodimer. Requires Mg(2+) as cofactor.

It catalyses the reaction GDP-alpha-D-mannose + H2O = D-mannose + GDP + H(+). Its function is as follows. Hydrolyzes both GDP-mannose and GDP-glucose. Could participate in the regulation of cell wall biosynthesis by influencing the concentration of GDP-mannose or GDP-glucose in the cell. Might also be involved in the biosynthesis of the slime polysaccharide colanic acid. The protein is GDP-mannose mannosyl hydrolase of Escherichia coli (strain K12).